The primary structure comprises 474 residues: Aspartate ammonia-lyase (474 aa).

Residues T105, S144, T145, N146, and T191 each contribute to the L-aspartate site. Residues 322-331 (GSSIMPGKVN) are SS loop. S323 acts as the Proton acceptor in catalysis. 2 residues coordinate L-aspartate: S324 and K329.

This sequence belongs to the class-II fumarase/aspartase family. Aspartase subfamily. Homotetramer.

The catalysed reaction is L-aspartate = fumarate + NH4(+). It catalyses the reaction L-phenylalanine = (E)-cinnamate + NH4(+). Its activity is regulated as follows. Does not require any divalent metal ion for activation of catalysis, but the activity is slightly increased in the presence of Mg(2+), Mn(2+), Ca(2+) or Co(2+). Catalyzes the reversible conversion of L-aspartate to fumarate and ammonia. Can also utilize L-phenylalanine to form cinnamic acid. Exhibits the highest specific activity towards L-phenylalanine, but catalytic efficiency is 3-fold higher with L-aspartate. This Pseudomonas aeruginosa (strain ATCC 15692 / DSM 22644 / CIP 104116 / JCM 14847 / LMG 12228 / 1C / PRS 101 / PAO1) protein is Aspartate ammonia-lyase.